Reading from the N-terminus, the 320-residue chain is Probable protein adenylyltransferase aq_aa38 (320 aa).

The Fido domain maps to 76–206 (VSEALILWIY…AIVVVEKLSR (131 aa)). ATP-binding positions include 100–101 (KS), 157–159 (GNG), and arginine 163.

Belongs to the fic family.

The catalysed reaction is L-tyrosyl-[protein] + ATP = O-(5'-adenylyl)-L-tyrosyl-[protein] + diphosphate. It carries out the reaction L-threonyl-[protein] + ATP = 3-O-(5'-adenylyl)-L-threonyl-[protein] + diphosphate. Probable adenylyltransferase that mediates the addition of adenosine 5'-monophosphate (AMP) to specific residues of target proteins. The chain is Probable protein adenylyltransferase aq_aa38 from Aquifex aeolicus (strain VF5).